The primary structure comprises 125 residues: Barwin (125 aa).

Gln1 is subject to Pyrrolidone carboxylic acid. The Barwin domain occupies 1-125 (QQANDVRATY…VNYQFVDCRD (125 aa)). Intrachain disulfides connect Cys31–Cys63, Cys52–Cys86, and Cys66–Cys123.

In terms of biological role, may be involved in a defense mechanism. Probable plant lectin. Binds weakly a chitin analog. This chain is Barwin, found in Hordeum vulgare (Barley).